We begin with the raw amino-acid sequence, 854 residues long: Leucine--tRNA ligase (854 aa).

Positions 1–32 (MARRDMAAETMDPRASTEPSPNEPREPARYDH) are disordered. The span at 23–32 (EPREPARYDH) shows a compositional bias: basic and acidic residues. The 'HIGH' region motif lies at 69–80 (PYPSGSGLHVGH). Residues 633 to 637 (KMSKS) carry the 'KMSKS' region motif. K636 provides a ligand contact to ATP.

This sequence belongs to the class-I aminoacyl-tRNA synthetase family.

It is found in the cytoplasm. It catalyses the reaction tRNA(Leu) + L-leucine + ATP = L-leucyl-tRNA(Leu) + AMP + diphosphate. The protein is Leucine--tRNA ligase of Sorangium cellulosum (strain So ce56) (Polyangium cellulosum (strain So ce56)).